The primary structure comprises 259 residues: Triosephosphate isomerase (259 aa).

10–12 (NWK) contributes to the substrate binding site. The Electrophile role is filled by His-102. The active-site Proton acceptor is the Glu-172. Substrate contacts are provided by residues Gly-178, Ser-218, and 239–240 (GG).

This sequence belongs to the triosephosphate isomerase family. As to quaternary structure, homodimer.

The protein resides in the cytoplasm. It carries out the reaction D-glyceraldehyde 3-phosphate = dihydroxyacetone phosphate. Its pathway is carbohydrate biosynthesis; gluconeogenesis. It functions in the pathway carbohydrate degradation; glycolysis; D-glyceraldehyde 3-phosphate from glycerone phosphate: step 1/1. Functionally, involved in the gluconeogenesis. Catalyzes stereospecifically the conversion of dihydroxyacetone phosphate (DHAP) to D-glyceraldehyde-3-phosphate (G3P). This is Triosephosphate isomerase from Leifsonia xyli subsp. xyli (strain CTCB07).